The sequence spans 259 residues: Glycerol-3-phosphate acyltransferase (259 aa).

The next 7 helical transmembrane spans lie at 11 to 31, 62 to 82, 93 to 112, 124 to 144, 152 to 172, 188 to 208, and 211 to 231; these read IILA…IIIV, LVVA…AILL, TSYF…PIYY, LGLL…VWFI, VSVA…IPYL, FSVA…HYWF, and IWAS…LILG.

This sequence belongs to the PlsY family. Probably interacts with PlsX.

It localises to the cell membrane. The enzyme catalyses an acyl phosphate + sn-glycerol 3-phosphate = a 1-acyl-sn-glycero-3-phosphate + phosphate. The protein operates within lipid metabolism; phospholipid metabolism. Functionally, catalyzes the transfer of an acyl group from acyl-phosphate (acyl-PO(4)) to glycerol-3-phosphate (G3P) to form lysophosphatidic acid (LPA). This enzyme utilizes acyl-phosphate as fatty acyl donor, but not acyl-CoA or acyl-ACP. In Mycoplasma capricolum subsp. capricolum (strain California kid / ATCC 27343 / NCTC 10154), this protein is Glycerol-3-phosphate acyltransferase.